The chain runs to 365 residues: Protein RecA (365 aa).

Position 73-80 (73-80) interacts with ATP; the sequence is GPESSGKT.

The protein belongs to the RecA family.

The protein localises to the cytoplasm. Its function is as follows. Can catalyze the hydrolysis of ATP in the presence of single-stranded DNA, the ATP-dependent uptake of single-stranded DNA by duplex DNA, and the ATP-dependent hybridization of homologous single-stranded DNAs. It interacts with LexA causing its activation and leading to its autocatalytic cleavage. The chain is Protein RecA from Prochlorococcus marinus (strain MIT 9215).